We begin with the raw amino-acid sequence, 158 residues long: Cyclic pyranopterin monophosphate synthase (158 aa).

Residues 75 to 77 and 113 to 114 each bind substrate; these read LCH and ME. Asp128 is a catalytic residue.

This sequence belongs to the MoaC family. Homohexamer; trimer of dimers.

It catalyses the reaction (8S)-3',8-cyclo-7,8-dihydroguanosine 5'-triphosphate = cyclic pyranopterin phosphate + diphosphate. The protein operates within cofactor biosynthesis; molybdopterin biosynthesis. Functionally, catalyzes the conversion of (8S)-3',8-cyclo-7,8-dihydroguanosine 5'-triphosphate to cyclic pyranopterin monophosphate (cPMP). The chain is Cyclic pyranopterin monophosphate synthase from Polynucleobacter asymbioticus (strain DSM 18221 / CIP 109841 / QLW-P1DMWA-1) (Polynucleobacter necessarius subsp. asymbioticus).